Reading from the N-terminus, the 438-residue chain is MEFKIEKKGTNKAIIEVEVEAEKFEEGLQKSYLKNAKYFKIPGFRPGKAPRSLIERAYGEEVFYDDAIDYVLNETYPKVIEESKLEVVSRPEVDIVQVGKGKSFIYKAEVYVKPEFELGQYKGVEITKIEYPVAEEEVEHELEHLREENARFVPVERPVENGDIVTIDFEGFVDGEPINGGSAKDYELTIGSNTFIPGFEEQLIGMNKGEEKEIEVTFPEDYQEPSLAGKKATFKVKVKDIKVKELPELDDEFAKDVSEFETLEELKANIRNRIREKNDKRAKDEMIDAILEKIAQNTSIDIPEPMIENQINYYVEDVARNLQYFGMTYERYLQAIGKTDKEFRSQFRERAEKAVRNNLILEKIAKVENIQATEEELQKELERLAKMYNLEVDKLKERLSEDDIEYIKEGIILNKAIDFIYENAKIISEDNQGENQEN.

Positions 162-247 (GDIVTIDFEG…VKDIKVKELP (86 aa)) constitute a PPIase FKBP-type domain.

Belongs to the FKBP-type PPIase family. Tig subfamily.

It is found in the cytoplasm. The catalysed reaction is [protein]-peptidylproline (omega=180) = [protein]-peptidylproline (omega=0). Involved in protein export. Acts as a chaperone by maintaining the newly synthesized protein in an open conformation. Functions as a peptidyl-prolyl cis-trans isomerase. This Caldicellulosiruptor bescii (strain ATCC BAA-1888 / DSM 6725 / KCTC 15123 / Z-1320) (Anaerocellum thermophilum) protein is Trigger factor.